A 257-amino-acid polypeptide reads, in one-letter code: Deoxyribose-phosphate aldolase (257 aa).

Aspartate 102 functions as the Proton donor/acceptor in the catalytic mechanism. Lysine 166 acts as the Schiff-base intermediate with acetaldehyde in catalysis. Lysine 198 (proton donor/acceptor) is an active-site residue.

The protein belongs to the DeoC/FbaB aldolase family. DeoC type 2 subfamily.

It localises to the cytoplasm. It carries out the reaction 2-deoxy-D-ribose 5-phosphate = D-glyceraldehyde 3-phosphate + acetaldehyde. It functions in the pathway carbohydrate degradation; 2-deoxy-D-ribose 1-phosphate degradation; D-glyceraldehyde 3-phosphate and acetaldehyde from 2-deoxy-alpha-D-ribose 1-phosphate: step 2/2. Its function is as follows. Catalyzes a reversible aldol reaction between acetaldehyde and D-glyceraldehyde 3-phosphate to generate 2-deoxy-D-ribose 5-phosphate. The chain is Deoxyribose-phosphate aldolase from Aeromonas hydrophila subsp. hydrophila (strain ATCC 7966 / DSM 30187 / BCRC 13018 / CCUG 14551 / JCM 1027 / KCTC 2358 / NCIMB 9240 / NCTC 8049).